The chain runs to 194 residues: Peptidyl-tRNA hydrolase (194 aa).

Residue Tyr17 coordinates tRNA. His22 (proton acceptor) is an active-site residue. Positions 68, 70, and 116 each coordinate tRNA.

Belongs to the PTH family. In terms of assembly, monomer.

Its subcellular location is the cytoplasm. It catalyses the reaction an N-acyl-L-alpha-aminoacyl-tRNA + H2O = an N-acyl-L-amino acid + a tRNA + H(+). Its function is as follows. Hydrolyzes ribosome-free peptidyl-tRNAs (with 1 or more amino acids incorporated), which drop off the ribosome during protein synthesis, or as a result of ribosome stalling. Functionally, catalyzes the release of premature peptidyl moieties from peptidyl-tRNA molecules trapped in stalled 50S ribosomal subunits, and thus maintains levels of free tRNAs and 50S ribosomes. The protein is Peptidyl-tRNA hydrolase of Histophilus somni (strain 129Pt) (Haemophilus somnus).